The following is a 130-amino-acid chain: Small ribosomal subunit protein uS8 (130 aa).

Belongs to the universal ribosomal protein uS8 family. Part of the 30S ribosomal subunit. Contacts proteins S5 and S12.

Functionally, one of the primary rRNA binding proteins, it binds directly to 16S rRNA central domain where it helps coordinate assembly of the platform of the 30S subunit. This is Small ribosomal subunit protein uS8 from Coxiella burnetii (strain RSA 331 / Henzerling II).